The primary structure comprises 241 residues: 15,16-dihydrobiliverdin:ferredoxin oxidoreductase (241 aa).

It belongs to the HY2 family.

The enzyme catalyses 15,16-dihydrobiliverdin + oxidized 2[4Fe-4S]-[ferredoxin] = biliverdin IXalpha + reduced 2[4Fe-4S]-[ferredoxin] + 2 H(+). Its function is as follows. Catalyzes the two-electron reduction of biliverdin IX-alpha at the C15 methine bridge. The polypeptide is 15,16-dihydrobiliverdin:ferredoxin oxidoreductase (pebA) (Prochlorococcus marinus (strain SARG / CCMP1375 / SS120)).